Here is a 224-residue protein sequence, read N- to C-terminus: tRNA (guanine-N(7)-)-methyltransferase (224 aa).

Residues E56, E81, D108, and D131 each coordinate S-adenosyl-L-methionine. The active site involves D131. Substrate-binding positions include K135, D167, and 202-205 (TKFE).

The protein belongs to the class I-like SAM-binding methyltransferase superfamily. TrmB family.

The catalysed reaction is guanosine(46) in tRNA + S-adenosyl-L-methionine = N(7)-methylguanosine(46) in tRNA + S-adenosyl-L-homocysteine. It functions in the pathway tRNA modification; N(7)-methylguanine-tRNA biosynthesis. Its function is as follows. Catalyzes the formation of N(7)-methylguanine at position 46 (m7G46) in tRNA. The protein is tRNA (guanine-N(7)-)-methyltransferase of Nitrosomonas europaea (strain ATCC 19718 / CIP 103999 / KCTC 2705 / NBRC 14298).